The following is a 533-amino-acid chain: DELLA protein 2 (533 aa).

Over residues 1 to 12 the composition is skewed to basic and acidic residues; that stretch reads MKREHKLEHEDM. The interval 1 to 24 is disordered; that stretch reads MKREHKLEHEDMSSGSGKSGVCWE. The DELLA motif signature appears at 31–35; the sequence is DELLA. The region spanning 157–522 is the GRAS domain; sequence VETQEKGIRL…RPLIATSAWK (366 aa). Residues 164–218 are leucine repeat I (LRI); the sequence is IRLVHSLMACAEAVEQNNLKMAEALVKQIGYLAVSQEGAMRKVATYFAEGLARRI. Positions 166-203 are required for possible homodimerization; sequence LVHSLMACAEAVEQNNLKMAEALVKQIGYLAVSQEGAM. The LxCxE motif; degenerate signature appears at 171–175; that stretch reads MACAE. Positions 232-297 are VHIID; that stretch reads QIHFYETCPN…GGPPAFRLTG (66 aa). Residues 263–267 carry the VHIID motif; the sequence is VHVID. The segment at 311-343 is leucine repeat II (LRII); sequence QVGWRLAQFAQTIHVQFEYRGFVANSLADLDAS. Residues 355–443 are PFYRE; that stretch reads VAVNSVFELH…EVYLGKQICN (89 aa). Positions 363–367 match the LXXLL motif; degenerate motif; it reads LHKLN. The SAW stretch occupies residues 446–522; that stretch reads ACEGTDRVER…RPLIATSAWK (77 aa).

This sequence belongs to the GRAS family. DELLA subfamily. As to quaternary structure, may be a homodimer. In terms of processing, ubiquitinated. Upon GA application it is ubiquitinated, leading to its subsequent degradation.

The protein resides in the nucleus. In terms of biological role, probable transcriptional regulator that acts as a repressor of the gibberellin (GA) signaling pathway. Probably acts by participating in large multiprotein complexes that repress transcription of GA-inducible genes. Upon GA application, it is degraded by the proteasome, allowing the GA signaling pathway. Together with DELLA1, required to enable arbuscule development during arbuscular mycorrhizal (AM) symbiosis with AM fungi (e.g. Glomus versiforme) via the regulation of RAM1 which, in turn, regulates various AM genes (e.g. NSP1, NSP2, PT4, LEC5, RAM2, EXO70I, STR and RAD1). In Medicago truncatula (Barrel medic), this protein is DELLA protein 2.